The sequence spans 498 residues: Probable malate:quinone oxidoreductase (498 aa).

The protein belongs to the MQO family. The cofactor is FAD.

It carries out the reaction (S)-malate + a quinone = a quinol + oxaloacetate. Its pathway is carbohydrate metabolism; tricarboxylic acid cycle; oxaloacetate from (S)-malate (quinone route): step 1/1. This Prochlorococcus marinus (strain AS9601) protein is Probable malate:quinone oxidoreductase.